Reading from the N-terminus, the 134-residue chain is MEFVMKQALGGATKDMGKMLGGDEEKDPDAAKKEEERQEALRQAEEERKAKYAKMEAEREVMRQGIRDKYGIKKKEEREAEAQAAMEANSEGSLTRPKKAIPPGCGDEPEEEDESILDTVIKYLPGPLQDMFKK.

Disordered stretches follow at residues 1–60 (MEFV…AERE) and 74–114 (KKEE…EEDE). The segment covering 15 to 60 (DMGKMLGGDEEKDPDAAKKEEERQEALRQAEEERKAKYAKMEAERE) has biased composition (basic and acidic residues). Positions 29–64 (DAAKKEEERQEALRQAEEERKAKYAKMEAEREVMRQ) form a coiled coil. The interaction with the SNARE complex stretch occupies residues 48–70 (RKAKYAKMEAEREVMRQGIRDKY).

This sequence belongs to the complexin/synaphin family. As to quaternary structure, binds to the SNARE core complex containing SNAP25, VAMP2 and STX1A. In terms of tissue distribution, nervous system, and pancreatic islet cells. Present in many brain regions, including hippocampus and cerebellum. In the retina, present at conventional amacrine cell synapses (at protein level).

It is found in the cytoplasm. The protein localises to the cytosol. The protein resides in the perikaryon. It localises to the presynapse. Functionally, positively regulates a late step in exocytosis of various cytoplasmic vesicles, such as synaptic vesicles and other secretory vesicles. Organizes the SNAREs into a cross-linked zigzag topology that, when interposed between the vesicle and plasma membranes, is incompatible with fusion, thereby preventing SNAREs from releasing neurotransmitters until an action potential arrives at the synapse. Also involved in glucose-induced secretion of insulin by pancreatic beta-cells. Essential for motor behavior. In Mus musculus (Mouse), this protein is Complexin-1 (Cplx1).